An 881-amino-acid polypeptide reads, in one-letter code: Probable inorganic carbon transporter subunit DabA (881 aa).

Zn(2+) contacts are provided by Cys-399, Asp-401, His-585, and Cys-600.

This sequence belongs to the inorganic carbon transporter (TC 9.A.2) DabA family. In terms of assembly, forms a complex with DabB. The cofactor is Zn(2+).

Its subcellular location is the cell membrane. Functionally, part of an energy-coupled inorganic carbon pump. The sequence is that of Probable inorganic carbon transporter subunit DabA from Geobacillus sp. (strain WCH70).